The chain runs to 556 residues: Formate--tetrahydrofolate ligase 1 (556 aa).

Residue 65–72 (TPAGEGKS) participates in ATP binding.

This sequence belongs to the formate--tetrahydrofolate ligase family.

It carries out the reaction (6S)-5,6,7,8-tetrahydrofolate + formate + ATP = (6R)-10-formyltetrahydrofolate + ADP + phosphate. It participates in one-carbon metabolism; tetrahydrofolate interconversion. The polypeptide is Formate--tetrahydrofolate ligase 1 (Streptococcus pyogenes serotype M4 (strain MGAS10750)).